The following is a 479-amino-acid chain: Ribosomal RNA small subunit methyltransferase F (479 aa).

Residues 125–131 (AAAPGSK), E149, G177, and D194 each bind S-adenosyl-L-methionine. C247 acts as the Nucleophile in catalysis.

It belongs to the class I-like SAM-binding methyltransferase superfamily. RsmB/NOP family.

The protein localises to the cytoplasm. The enzyme catalyses cytidine(1407) in 16S rRNA + S-adenosyl-L-methionine = 5-methylcytidine(1407) in 16S rRNA + S-adenosyl-L-homocysteine + H(+). Its function is as follows. Specifically methylates the cytosine at position 1407 (m5C1407) of 16S rRNA. This chain is Ribosomal RNA small subunit methyltransferase F, found in Shigella flexneri serotype 5b (strain 8401).